A 505-amino-acid polypeptide reads, in one-letter code: ATP synthase subunit alpha (505 aa).

171-178 contacts ATP; that stretch reads GDRQTGKT.

The protein belongs to the ATPase alpha/beta chains family. As to quaternary structure, F-type ATPases have 2 components, CF(1) - the catalytic core - and CF(0) - the membrane proton channel. CF(1) has five subunits: alpha(3), beta(3), gamma(1), delta(1), epsilon(1). CF(0) has three main subunits: a(1), b(2) and c(9-12). The alpha and beta chains form an alternating ring which encloses part of the gamma chain. CF(1) is attached to CF(0) by a central stalk formed by the gamma and epsilon chains, while a peripheral stalk is formed by the delta and b chains.

Its subcellular location is the cell inner membrane. The enzyme catalyses ATP + H2O + 4 H(+)(in) = ADP + phosphate + 5 H(+)(out). Its function is as follows. Produces ATP from ADP in the presence of a proton gradient across the membrane. The alpha chain is a regulatory subunit. The sequence is that of ATP synthase subunit alpha from Nitratiruptor sp. (strain SB155-2).